An 86-amino-acid polypeptide reads, in one-letter code: Large ribosomal subunit protein bL27 (86 aa).

The segment at 1-31 is disordered; that stretch reads MAHKKAGGSSRNGRDSAGQRRGVKKFGGEPV.

This sequence belongs to the bacterial ribosomal protein bL27 family.

The polypeptide is Large ribosomal subunit protein bL27 (Desulfotalea psychrophila (strain LSv54 / DSM 12343)).